A 316-amino-acid polypeptide reads, in one-letter code: UDP-N-acetylglucosamine transporter yea4 (316 aa).

Topologically, residues 1–3 are cytoplasmic; that stretch reads MIA. Residues 4–24 form a helical membrane-spanning segment; the sequence is SALSFIFGGCCSNAYALEALV. At 25-31 the chain is on the lumenal side; sequence REFPSSG. Residues 32-52 traverse the membrane as a helical segment; that stretch reads ILITFSQFILITIEGLIYFLL. The Cytoplasmic portion of the chain corresponds to 53–67; that stretch reads NDVQSLKHPKVPRKR. The helical transmembrane segment at 68 to 88 threads the bilayer; that stretch reads WFVVVVMFFAINVLNNVALGF. Topologically, residues 89 to 120 are lumenal; the sequence is DISVPVHIILRSSGPLTTMAVGRILAGKRYSS. Residues 121 to 141 form a helical membrane-spanning segment; that stretch reads LQIGSVFILTIGVIIATLGNA. Over 142–153 the chain is Cytoplasmic; sequence KDLHLHVESMTR. A helical membrane pass occupies residues 154–174; the sequence is FGIGFTILVITQILGAIMGLV. The Lumenal segment spans residues 175–187; the sequence is LENTYRIYGSDWR. The chain crosses the membrane as a helical span at residues 188–208; the sequence is ESLFYTHALSLPFFLFLLRPI. Over 209–214 the chain is Cytoplasmic; that stretch reads RSQWND. Residues 215–235 form a helical membrane-spanning segment; that stretch reads LFAIHTKGFLNLPSGVWYLCF. At 236–274 the chain is on the lumenal side; the sequence is NTLAQYFCVRGVNALGAETSALTVSVVLNVRKFVSLCLS. A helical membrane pass occupies residues 275-295; it reads LILFENEMGPAVKFGALLVFG. Residues 296-316 are Cytoplasmic-facing; sequence SSAVYASARSKPKTNGLKKND.

The protein belongs to the nucleotide-sugar transporter family. SLC35B subfamily.

The protein localises to the endoplasmic reticulum. The protein resides in the endoplasmic reticulum membrane. In terms of biological role, sugar transporter that specifically mediates the transport of UDP-N-acetylglucosamine (UDP-GlcNAc) and is required for cell wall chitin synthesis. This chain is UDP-N-acetylglucosamine transporter yea4 (yea4), found in Schizosaccharomyces pombe (strain 972 / ATCC 24843) (Fission yeast).